The sequence spans 359 residues: Peptide chain release factor 1 (359 aa).

The residue at position 235 (glutamine 235) is an N5-methylglutamine.

The protein belongs to the prokaryotic/mitochondrial release factor family. In terms of processing, methylated by PrmC. Methylation increases the termination efficiency of RF1.

Its subcellular location is the cytoplasm. Its function is as follows. Peptide chain release factor 1 directs the termination of translation in response to the peptide chain termination codons UAG and UAA. This is Peptide chain release factor 1 from Anaplasma phagocytophilum (strain HZ).